Reading from the N-terminus, the 156-residue chain is Endoribonuclease YbeY (156 aa).

Zn(2+) contacts are provided by histidine 115, histidine 119, and histidine 125.

This sequence belongs to the endoribonuclease YbeY family. Requires Zn(2+) as cofactor.

Its subcellular location is the cytoplasm. Single strand-specific metallo-endoribonuclease involved in late-stage 70S ribosome quality control and in maturation of the 3' terminus of the 16S rRNA. The sequence is that of Endoribonuclease YbeY from Mannheimia succiniciproducens (strain KCTC 0769BP / MBEL55E).